A 397-amino-acid chain; its full sequence is MNSSILVINCGSSSLKFALIDSASHEAVMTGLAEKLGLADACITFKHNGDKQTALLSAPDHAAAMHAIIEKLQQVSLLDSVKAIGHRVVHGGEHFKQSALLDETAINEIERCIKLAPLHNPAHILGIRTAIKEFPSLPQVAVFDTSFHQTMPEKAYLYAVPMKLYRENSLRRYGMHGTSYRFVAEEAAKMLGKPANETSLVIAHLGNGASISAIRNGKCADTSMGLTPLEGLVMGTRSGDIDPSVFGYLATERGMDIQSITNMLNKESGLLGLSELSNDCRELEEAAAKGHEGAKRALEVFAYRLAKYVASMSVGAGRLDAVVFTGGIGENSSFLRAEVINQLGFLGLKLDAAANEACIRGNAGRITAADSVPALVINTNEELMIAMDTAKLAGLAN.

N9 is a Mg(2+) binding site. Position 16 (K16) interacts with ATP. R87 is a binding site for substrate. The active-site Proton donor/acceptor is D144. ATP contacts are provided by residues 204-208, 279-281, and 327-331; these read HLGNG, DCR, and GIGEN. Position 381 (E381) interacts with Mg(2+).

Belongs to the acetokinase family. As to quaternary structure, homodimer. It depends on Mg(2+) as a cofactor. The cofactor is Mn(2+).

It is found in the cytoplasm. It catalyses the reaction acetate + ATP = acetyl phosphate + ADP. It functions in the pathway metabolic intermediate biosynthesis; acetyl-CoA biosynthesis; acetyl-CoA from acetate: step 1/2. Catalyzes the formation of acetyl phosphate from acetate and ATP. Can also catalyze the reverse reaction. In Chromobacterium violaceum (strain ATCC 12472 / DSM 30191 / JCM 1249 / CCUG 213 / NBRC 12614 / NCIMB 9131 / NCTC 9757 / MK), this protein is Acetate kinase.